A 248-amino-acid chain; its full sequence is Probable transcriptional regulatory protein Nwi_2729 (248 aa).

Positions 1 to 21 (MAGHSQFKNIMHRKGRQDAQK) are disordered.

This sequence belongs to the TACO1 family.

It localises to the cytoplasm. The sequence is that of Probable transcriptional regulatory protein Nwi_2729 from Nitrobacter winogradskyi (strain ATCC 25391 / DSM 10237 / CIP 104748 / NCIMB 11846 / Nb-255).